The sequence spans 194 residues: Ras-related protein RabU (194 aa).

A GTP-binding site is contributed by 19 to 27 (GYDYECGIK). Residues 42 to 50 (PESQVGVDF) carry the Effector region motif. Residues 68 to 72 (PQNKY) and 130 to 133 (NNSE) contribute to the GTP site.

The protein belongs to the small GTPase superfamily. Rab family.

The sequence is that of Ras-related protein RabU (rabU) from Dictyostelium discoideum (Social amoeba).